The primary structure comprises 362 residues: MLKRTPLFDLYKEYGGKTIDFGGWELPVQFSSIKKEHEAVRTAAGLFDVSHMGEVEVSGNDSLSFLQRLMTNDVSALTPGRAQYTAMCYPDGGTVDDLLIYQKGENRYLLVINASNIDKDLAWMKEHAAGDVQIDNQSDQIALLAVQGPKAEAILKNLTDADVSALKPFAFIDEADISGRKALISRTGYTGEDGYEIYCRSDDAMHIWKKIIDAGDAYGLIPCGLGARDTLRFEAKLPLYGQELTRDITPIEAGIGFAVKHKKESDFFGKSVLSEQKENGAKRKLVGLEMIEKGIPRHGYEVFQNGKSVGKVTTGTQSPTLGKNVGLALIDSETSEIGTVVDVEIRKKLVKAKVVKTPFYKR.

This sequence belongs to the GcvT family. In terms of assembly, the glycine cleavage system is composed of four proteins: P, T, L and H.

The enzyme catalyses N(6)-[(R)-S(8)-aminomethyldihydrolipoyl]-L-lysyl-[protein] + (6S)-5,6,7,8-tetrahydrofolate = N(6)-[(R)-dihydrolipoyl]-L-lysyl-[protein] + (6R)-5,10-methylene-5,6,7,8-tetrahydrofolate + NH4(+). Its function is as follows. The glycine cleavage system catalyzes the degradation of glycine. In Bacillus subtilis (strain 168), this protein is Aminomethyltransferase.